The chain runs to 870 residues: Dynamin-2 (870 aa).

The Dynamin-type G domain occupies 28 to 294; that stretch reads HLDLPQIAVV…LTNHIRESLP (267 aa). Residues 38–45 form a G1 motif region; the sequence is GGQSAGKS. Ser41, Gly43, Lys44, Ser45, Ser46, Arg59, and Gly60 together coordinate GDP. Residues 64–66 form a G2 motif region; the sequence is VTR. Positions 136 to 139 are G3 motif; it reads DLPG. The interval 205-208 is G4 motif; the sequence is TKLD. GDP-binding residues include Lys206, Asp208, and Asp211. Tyr231 carries the phosphotyrosine modification. A G5 motif region spans residues 235–238; it reads VNRS. 3 residues coordinate GDP: Asn236, Arg237, and Gln239. Lys299 carries the post-translational modification N6-acetyllysine. Residues 519 to 625 enclose the PH domain; sequence LVIRRGWLTI…WKASFLRAGV (107 aa). Position 597 is a phosphotyrosine (Tyr597). Lys598 is subject to N6-acetyllysine. One can recognise a GED domain in the interval 653-744; it reads VETIRNLVDS…IIGDISTSTV (92 aa). The interval 741-870 is disordered; sequence TSTVSTPVPP…IRPAEPSLLD (130 aa). At Thr755 the chain carries Phosphothreonine. The span at 756–767 shows a compositional bias: polar residues; sequence WLQNTSSHSPTP. At Ser764 the chain carries Phosphoserine; by CDK1. A compositionally biased stretch (pro residues) spans 826–846; sequence SAPPQIPSRPARIPPGIPPGV. Positions 847–864 are enriched in low complexity; the sequence is PSRRAPAAPSRPTIIRPA.

Belongs to the TRAFAC class dynamin-like GTPase superfamily. Dynamin/Fzo/YdjA family. Oligomerizes into a helical polymer that self-assembles around the vesicle membrane, when associated to the menbrane through lipid binding. Interacts with SHANK1 and SHANK2. Interacts with SNX9. Interacts (via C-terminal proline-rich domain (PRD)) with SNX18 (via SH3 domain); this interaction regulates ATG9A and ATG16L1 trafficking from recycling endosomes to sites of autophagosome formation. Interacts with SNX33 (via SH3 domain). Interacts with PSTPIP1 (via SH3 domain). Interacts with CTNND2. Interacts (via C-terminal proline-rich domain (PRD)) with BIN1 (via SH3 domain); this interaction allows the recruitment of DNM2 to the membrane tubules and inhibits self-assembly-stimulated GTPase activity on the membrane. Interacts with GABARAP, GABARAPL1 and GABARAPL2. Interacts with MAP1LC3B (the lipidate and non-lipidated LC3 form); this interaction mediates recycling endosome scission leading to autophagosome release. Interacts with ITSN1. Interacts with MYOF. May interact with PIK3C3. May be a component of a complex composed of RAB5A (in GDP-bound form), DYN2 and PIK3C3. Interacts with SDC4; this interaction is markedly enhanced at focal ahesion site upon induction of focal adhesions and stress-fiber formation. Interacts with ACTN1. Interacts with CTTN; this interaction stimulates the intrinsic GTPase activity of DNM2 and stabilizes the association of DNM2 and actin filaments; in addition this interaction is stimulated by ligand binding to the receptor, leading to the recruitment of the DNM2-CTTN complex to the sequestered receptor-ligand complex to its internalization. Interacts with NOSTRIN (via SH3 domain); this interaction allows the recruitment of NOS3 to dynamin-positive structures. Interacts (via C-terminal proline-rich domain (PRD)) with SH3BP4 (via SH3 domain); this interaction controls the GTPase activity and is prevented by EGFR-induced tyrosine phosphorylation of either DNM2 or SH3BP4. Interacts with MYO1E (via SH3 domain). Interacts with TUBG1; this interaction may participate in centrosome cohesion. Post-translationally, phosphorylation at Ser-848 by GSK3-alpha relieves the inhibition of BIN1 and promotes endocytosis. Phosphorylation at Ser-764 by CDK1 is greatly increased upon mitotic entry. It regulates cytokinesis downstream of calcineurin, and does not affect clathrin-mediated endocytosis. Dephosphorylated by calcineurin/PP2 during cytokinesis in a Ca(2+)- and calmodulin-dependent manner. Phosphorylated on tyrosine residues by EGFR. Phosphorylated on tyrosine residues after activation of SRC. Ubiquitously expressed. Brain expression is restricted to glial cells and fibroblasts. Highest levels in the testis.

Its subcellular location is the cytoplasm. The protein resides in the cytoskeleton. It is found in the cytoplasmic vesicle. It localises to the clathrin-coated vesicle. The protein localises to the cell projection. Its subcellular location is the uropodium. The protein resides in the endosome. It is found in the microtubule organizing center. It localises to the centrosome. The protein localises to the centriole. Its subcellular location is the recycling endosome. The protein resides in the phagocytic cup. It is found in the phagosome membrane. It localises to the podosome. The protein localises to the cell junction. Its subcellular location is the postsynaptic density. The protein resides in the synapse. It is found in the synaptosome. It localises to the midbody. The protein localises to the membrane. Its subcellular location is the clathrin-coated pit. The protein resides in the cell membrane. It catalyses the reaction GTP + H2O = GDP + phosphate + H(+). In terms of biological role, catalyzes the hydrolysis of GTP and utilizes this energy to mediate vesicle scission at plasma membrane during endocytosis and filament remodeling at many actin structures during organization of the actin cytoskeleton. Plays an important role in vesicular trafficking processes, namely clathrin-mediated endocytosis (CME), exocytic and clathrin-coated vesicle from the trans-Golgi network, and PDGF stimulated macropinocytosis. During vesicular trafficking process, associates to the membrane, through lipid binding, and self-assembles into ring-like structure through oligomerization to form a helical polymer around the vesicle membrane and leading to vesicle scission. Plays a role in organization of the actin cytoskeleton by mediating arrangement of stress fibers and actin bundles in podocytes. During organization of the actin cytoskeleton, self-assembles into ring-like structure that directly bundles actin filaments to form typical membrane tubules decorated with dynamin spiral polymers. Self-assembly increases GTPase activity and the GTP hydrolysis causes the rapid depolymerization of dynamin spiral polymers, and results in dispersion of actin bundles. Remodels, through its interaction with CTTN, bundled actin filaments in a GTPase-dependent manner and plays a role in orchestrating the global actomyosin cytoskeleton. The interaction with CTTN stabilizes the interaction of DNM2 and actin filaments and stimulates the intrinsic GTPase activity that results in actin filament-barbed ends and increases the sensitivity of filaments in bundles to the actin depolymerizing factor, CFL1. Plays a role in the autophagy process, by participating in the formation of ATG9A vesicles destined for the autophagosomes through its interaction with SNX18, by mediating recycling endosome scission leading to autophagosome release through MAP1LC3B interaction and by regulating maturation of apoptotic cell corpse-containing phagosomes by recruiting PIK3C3 to the phagosome membrane. Also plays a role in cytokinesis. May participate in centrosome cohesion through its interaction with TUBG1. Plays a role in the regulation of neuron morphology, axon growth and formation of neuronal growth cones. Involved in membrane tubulation. The chain is Dynamin-2 from Rattus norvegicus (Rat).